The chain runs to 185 residues: ATP synthase subunit b (185 aa).

A helical membrane pass occupies residues 26 to 46 (LVLIGFAILLFIVIKFVVPMF).

Belongs to the ATPase B chain family. F-type ATPases have 2 components, F(1) - the catalytic core - and F(0) - the membrane proton channel. F(1) has five subunits: alpha(3), beta(3), gamma(1), delta(1), epsilon(1). F(0) has three main subunits: a(1), b(2) and c(10-14). The alpha and beta chains form an alternating ring which encloses part of the gamma chain. F(1) is attached to F(0) by a central stalk formed by the gamma and epsilon chains, while a peripheral stalk is formed by the delta and b chains.

The protein resides in the cell membrane. Functionally, f(1)F(0) ATP synthase produces ATP from ADP in the presence of a proton or sodium gradient. F-type ATPases consist of two structural domains, F(1) containing the extramembraneous catalytic core and F(0) containing the membrane proton channel, linked together by a central stalk and a peripheral stalk. During catalysis, ATP synthesis in the catalytic domain of F(1) is coupled via a rotary mechanism of the central stalk subunits to proton translocation. Component of the F(0) channel, it forms part of the peripheral stalk, linking F(1) to F(0). The polypeptide is ATP synthase subunit b (Renibacterium salmoninarum (strain ATCC 33209 / DSM 20767 / JCM 11484 / NBRC 15589 / NCIMB 2235)).